The primary structure comprises 258 residues: Snake venom serine protease 1 (258 aa).

The first 18 residues, 1–18, serve as a signal peptide directing secretion; that stretch reads MVLIRVLANLLILQLSYA. The propeptide occupies 19–24; it reads QKSSEL. The 225-residue stretch at 25-249 folds into the Peptidase S1 domain; that stretch reads VVGGDECNIN…YNDWIKSIIA (225 aa). 6 disulfides stabilise this stretch: Cys-31/Cys-163, Cys-50/Cys-66, Cys-98/Cys-256, Cys-142/Cys-210, Cys-174/Cys-189, and Cys-200/Cys-225. The N-linked (GlcNAc...) asparagine glycan is linked to Asn-44. Residues His-65 and Asp-110 each act as charge relay system in the active site. The Charge relay system role is filled by Ser-204.

Belongs to the peptidase S1 family. Snake venom subfamily. In terms of assembly, monomer. As to expression, expressed by the venom gland.

The protein localises to the secreted. In terms of biological role, snake venom serine protease that may act in the hemostasis system of the prey. The sequence is that of Snake venom serine protease 1 (TLG1) from Craspedocephalus gramineus (Bamboo pit viper).